A 104-amino-acid chain; its full sequence is Protein P3 (104 aa).

The helical transmembrane segment at 77–99 (LVFGVPQKTLLLGFGGLLVLGLV) threads the bilayer.

As to quaternary structure, homodimer.

The protein localises to the virion membrane. The protein is Protein P3 (III) of Pseudoalteromonas phage PM2 (Bacteriophage PM2).